Here is a 360-residue protein sequence, read N- to C-terminus: Glycoprotein-N-acetylgalactosamine 3-beta-galactosyltransferase 1 (360 aa).

Over 1-7 (MSIICAK) the chain is Cytoplasmic. Residues 8–28 (VAWLPLTLGTAMGFLITFYLA) form a helical; Signal-anchor for type II membrane protein membrane-spanning segment. At 29–360 (RTLLERNSQP…SDFLEPPMES (332 aa)) the chain is on the lumenal side. Cys79 and Cys103 are joined by a disulfide. UDP contacts are provided by Met82, Glu126, Gly127, Arg128, and Lys134. Residue Asn148 is glycosylated (N-linked (GlcNAc...) asparagine). Asp157 contacts UDP. The Mn(2+) site is built by Asp157 and Asp159. Residue Asn173 is glycosylated (N-linked (GlcNAc...) asparagine). Cysteines 220 and 234 form a disulfide. Residue Trp274 participates in a glycoprotein binding. Cys289 and Cys290 are oxidised to a cystine. Residues His298 and Tyr299 each contribute to the UDP site. Residue His298 participates in Mn(2+) binding. Residues Asn341 and Asn347 are each glycosylated (N-linked (GlcNAc...) asparagine).

It belongs to the glycosyltransferase 31 family. Beta3-Gal-T subfamily. Homodimer; disulfide-linked. It depends on Mn(2+) as a cofactor.

It localises to the membrane. It catalyses the reaction an N-acetyl-alpha-D-galactosaminyl derivative + UDP-alpha-D-galactose = a beta-D-galactosyl-(1-&gt;3)-N-acetyl-alpha-D-galactosaminyl derivative + UDP + H(+). It participates in protein modification; protein glycosylation. Functionally, glycosyltransferase that generates the core 1 O-glycan Gal-beta1-3GalNAc-alpha1-Ser/Thr (T antigen), which is a precursor for many extended O-glycans in glycoproteins. The polypeptide is Glycoprotein-N-acetylgalactosamine 3-beta-galactosyltransferase 1 (c1galt1) (Xenopus laevis (African clawed frog)).